We begin with the raw amino-acid sequence, 277 residues long: Formamidopyrimidine-DNA glycosylase (277 aa).

Pro2 serves as the catalytic Schiff-base intermediate with DNA. The Proton donor role is filled by Glu3. Lys60 functions as the Proton donor; for beta-elimination activity in the catalytic mechanism. Positions 94, 113, and 156 each coordinate DNA. The segment at 241-275 adopts an FPG-type zinc-finger fold; that stretch reads KVYNREGLPCPHCGKPIQRIKVAGRSSYYCSSCQK. The Proton donor; for delta-elimination activity role is filled by Arg265.

It belongs to the FPG family. Monomer. Requires Zn(2+) as cofactor.

It carries out the reaction Hydrolysis of DNA containing ring-opened 7-methylguanine residues, releasing 2,6-diamino-4-hydroxy-5-(N-methyl)formamidopyrimidine.. The catalysed reaction is 2'-deoxyribonucleotide-(2'-deoxyribose 5'-phosphate)-2'-deoxyribonucleotide-DNA = a 3'-end 2'-deoxyribonucleotide-(2,3-dehydro-2,3-deoxyribose 5'-phosphate)-DNA + a 5'-end 5'-phospho-2'-deoxyribonucleoside-DNA + H(+). Functionally, involved in base excision repair of DNA damaged by oxidation or by mutagenic agents. Acts as a DNA glycosylase that recognizes and removes damaged bases. Has a preference for oxidized purines, such as 7,8-dihydro-8-oxoguanine (8-oxoG). Has AP (apurinic/apyrimidinic) lyase activity and introduces nicks in the DNA strand. Cleaves the DNA backbone by beta-delta elimination to generate a single-strand break at the site of the removed base with both 3'- and 5'-phosphates. The chain is Formamidopyrimidine-DNA glycosylase from Desulforamulus reducens (strain ATCC BAA-1160 / DSM 100696 / MI-1) (Desulfotomaculum reducens).